Here is a 510-residue protein sequence, read N- to C-terminus: MSDDAWLAAQRKVLARTAPAPYADTLGRVERIGDGIAFVSGLADAALDELLRFESGASGFVHTLEADLMSVVLLDDGATVEAGARVTRTGAVIEVPVGEGLLGRVIDPLGRPLDRDEPVATVKRMPIERPAPAIIDRDLVSEPVETGVLIVDALFAVGRGQRELIIGDRATGKTALALDAIVNQKHSDMICIYVAIGQRSTAVQQVIESVRRYGAPERCVFVVAPAASAAGLQWIAPFAGVTIAEYFRDRGQHALVVIDDLTKHAATHRELALLTREPPGREAYPGDIFYVHARLLERAAKLSAKLGGGSLTALPIAETDAGNLSAYIPTNLISITDGQIVLDAALFAANQRPAVDVGLSVSRVGGKAQHPALREVSGRLRLDYAQFLELEMFSRFGGLTDAHVAGKIARGERIRALIAQPRFRPLRTVDEIALLAALAEGVFDAAPPAIATEARAQLAEQLLGAGMAAGWMDAPLDPATQAALVTTVREIVQRLTLEAANVPARTGSGK.

G167 to T174 lines the ATP pocket.

It belongs to the ATPase alpha/beta chains family. F-type ATPases have 2 components, CF(1) - the catalytic core - and CF(0) - the membrane proton channel. CF(1) has five subunits: alpha(3), beta(3), gamma(1), delta(1), epsilon(1). CF(0) has three main subunits: a(1), b(2) and c(9-12). The alpha and beta chains form an alternating ring which encloses part of the gamma chain. CF(1) is attached to CF(0) by a central stalk formed by the gamma and epsilon chains, while a peripheral stalk is formed by the delta and b chains.

It localises to the cell inner membrane. The enzyme catalyses ATP + H2O + 4 H(+)(in) = ADP + phosphate + 5 H(+)(out). Produces ATP from ADP in the presence of a proton gradient across the membrane. The alpha chain is a regulatory subunit. The polypeptide is ATP synthase subunit alpha 1 (Paraburkholderia xenovorans (strain LB400)).